The sequence spans 240 residues: MSLDMKEHPDAEVQKNQVLTLEDWKEKWVTRHISFHQEQGHQLLKKHLDTFLKGQSGLRVFFPLCGKAIEMKWFADRGHTVVGVEISEIGIREFFAEQNLSYTEEPLAEIAGAKVFKSSSGSISLYCCSIFDLPRANIGKFDRIWDRGALVAINPGDHDRYADIILSLLRKEFQYLVAVLSYDPTKHAGPPFYVPSAELKRLFGTKCSMQCLEEVDALEERHKAWGLDYLFEKLYLLTEK.

24-35 (WKEKWVTRHISF) contacts S-adenosyl-L-methionine. Position 34 is a phosphoserine (Ser-34). Residue Phe-35 participates in substrate binding. Lys-53 carries the post-translational modification N6-acetyllysine. S-adenosyl-L-methionine-binding positions include Leu-64, Glu-85, 129 to 130 (SI), and Arg-147.

It belongs to the class I-like SAM-binding methyltransferase superfamily. TPMT family. Monomer.

The protein localises to the cytoplasm. It carries out the reaction S-adenosyl-L-methionine + a thiopurine = S-adenosyl-L-homocysteine + a thiopurine S-methylether.. The catalysed reaction is mercaptopurine + S-adenosyl-L-methionine = 6-methylthiopurine + S-adenosyl-L-homocysteine + H(+). Functionally, catalyzes the S-methylation of thiopurine drugs such as 6-mercaptopurine (also called mercaptopurine, 6-MP or its brand name Purinethol) using S-adenosyl-L-methionine as the methyl donor. TPMT activity modulates the cytotoxic effects of thiopurine prodrugs. A natural substrate for this enzyme has yet to be identified. This is Thiopurine S-methyltransferase (Tpmt) from Mus musculus (Mouse).